The sequence spans 90 residues: Small ribosomal subunit protein bS16 (90 aa).

Belongs to the bacterial ribosomal protein bS16 family.

The sequence is that of Small ribosomal subunit protein bS16 from Lactococcus lactis subsp. cremoris (strain MG1363).